Reading from the N-terminus, the 330-residue chain is DNA primase small subunit PriS (330 aa).

Residues D101 and D103 contribute to the active site. Positions 116, 119, 128, and 131 each coordinate Zn(2+). D235 is an active-site residue.

The protein belongs to the eukaryotic-type primase small subunit family. In terms of assembly, heterodimer of a small subunit (PriS) and a large subunit (PriL). The cofactor is Mg(2+). Mn(2+) is required as a cofactor.

Its function is as follows. Catalytic subunit of DNA primase, an RNA polymerase that catalyzes the synthesis of short RNA molecules used as primers for DNA polymerase during DNA replication. The small subunit contains the primase catalytic core and has DNA synthesis activity on its own. Binding to the large subunit stabilizes and modulates the activity, increasing the rate of DNA synthesis while decreasing the length of the DNA fragments, and conferring RNA synthesis capability. The DNA polymerase activity may enable DNA primase to also catalyze primer extension after primer synthesis. May also play a role in DNA repair. The protein is DNA primase small subunit PriS of Saccharolobus islandicus (strain Y.N.15.51 / Yellowstone #2) (Sulfolobus islandicus).